A 555-amino-acid chain; its full sequence is Suppressor of tumorigenicity 7 protein-like (555 aa).

2 helical membrane passes run 36–56 and 80–100; these read GLAG…LYAL and FYVA…IFEW. A disordered region spans residues 126 to 148; sequence TESSISEPGSPSNNRESETSRQN.

This sequence belongs to the ST7 family.

Its subcellular location is the membrane. The polypeptide is Suppressor of tumorigenicity 7 protein-like (ST7L) (Bos taurus (Bovine)).